A 194-amino-acid polypeptide reads, in one-letter code: Thymidine kinase (194 aa).

ATP contacts are provided by residues 15-22 and 88-91; these read GSMFSGKS and DEVQ. Glu89 acts as the Proton acceptor in catalysis. 4 residues coordinate Zn(2+): Cys145, Cys148, Cys183, and Cys186.

The protein belongs to the thymidine kinase family. As to quaternary structure, homotetramer.

It is found in the cytoplasm. The catalysed reaction is thymidine + ATP = dTMP + ADP + H(+). The sequence is that of Thymidine kinase from Bacillus cereus (strain AH820).